Here is a 1390-residue protein sequence, read N- to C-terminus: Nuclear pore complex protein 14 (1390 aa).

2 stretches are compositionally biased toward polar residues: residues 434–455 and 464–521; these read SQKPISAPPSDQTPVTKPSTVF and LKSS…STPK. 3 disordered regions span residues 434 to 530, 851 to 874, and 985 to 1118; these read SQKP…KISD, PSSSLFSASPSTPSTKSDAATQAD, and QEIE…SKAA. Positions 851–864 are enriched in low complexity; it reads PSSSLFSASPSTPS. A compositionally biased stretch (basic and acidic residues) spans 986-1033; that stretch reads EIEKASSKVETLNKTEEVKDEKSENEVTPDLKSEEPKSLETKVKEEPK. Low complexity predominate over residues 1051–1071; the sequence is KTPSFSFNSTTTPKSTSSTSS. Repeat unit 1 spans residues 1073-1074; that stretch reads FG. The interval 1073-1373 is 17 X 2 AA repeats of F-G; that stretch reads FGGGLKTQTP…TPAPTSSVFG (301 aa). The span at 1078–1090 shows a compositional bias: polar residues; it reads KTQTPSSSNSTNI. Repeat unit 2 spans residues 1091–1092; sequence FG. Positions 1095–1109 are enriched in low complexity; that stretch reads TTTTATPTPASNTSS. Repeat copies occupy residues 1111 to 1112, 1122 to 1123, 1125 to 1126, 1163 to 1164, 1166 to 1167, and 1178 to 1179. The disordered stretch occupies residues 1183–1280; the sequence is TAPTVPNVDD…QASAPATGTS (98 aa). Residues 1201-1210 show a composition bias toward gly residues; that stretch reads NGGGSGGFMS. Residues 1231–1243 show a composition bias toward low complexity; the sequence is TSTGTSASSSSWL. Copy 9 of the repeat occupies 1244–1245; sequence FG. The segment covering 1264–1280 has biased composition (low complexity); that stretch reads TAGSSAQQASAPATGTS. Repeat copies occupy residues 1283-1284, 1289-1290, 1295-1296, 1300-1301, 1315-1316, 1344-1345, 1357-1358, and 1372-1373. Polar residues predominate over residues 1342–1371; it reads SLFGGGATPQTNTSIFGGGANTTPAPTSSV. A disordered region spans residues 1342 to 1390; sequence SLFGGGATPQTNTSIFGGGANTTPAPTSSVFGGGASANANKPTSFTSWR. Polar residues predominate over residues 1378–1390; it reads ANANKPTSFTSWR.

As to quaternary structure, interacts with caspase ced-3 (via propeptide); the interaction tethers ced-3 to the nuclear membrane and prevents its autoprocessing in absence of ced-4.

It localises to the nucleus. It is found in the nuclear pore complex. Its subcellular location is the nucleus membrane. In terms of biological role, may serve as a docking site in the receptor-mediated import of substrates across the nuclear pore complex. Plays a role in apoptosis by tethering caspase ced-3 to the nuclear membrane preventing its autoprocessing in absence of ced-4. The chain is Nuclear pore complex protein 14 from Caenorhabditis elegans.